The sequence spans 445 residues: Methylphloroacetophenone oxidase (445 aa).

The chain crosses the membrane as a helical span at residues 25-45 (VLSIALIGVACAISIRSILYV). N-linked (GlcNAc...) asparagine glycosylation is present at Asn51.

This sequence belongs to the cytochrome P450 family.

The protein resides in the membrane. It functions in the pathway secondary metabolite biosynthesis. In terms of biological role, methylphloroacetophenone oxidase; part of the gene cluster that mediates the biosynthesis of usnic acid, a dibenzofuran lichen product possessing a broad spectrum of biological activities. Two genes, mpas and mpao, comprise the usnic acid biosynthetic gene cluster with a single post-PKS enzyme, the methylphloracetophenone oxidase (mpao). The methylphloroacetophenone synthase (mpas) is a non-reducing polyketide synthase that produces methylphloracetophenone from acetate via a methylated tetraketide intermediate. The methylphloroacetophenone oxidase then carries out the oxidative dimerization of methylphloracetophenone to usnic acid. The protein is Methylphloroacetophenone oxidase of Cladonia uncialis (Cup lichen).